Here is a 354-residue protein sequence, read N- to C-terminus: GTPase Obg (354 aa).

The region spanning 1-159 (MKFVDEVKIH…RDLVLELKLL (159 aa)) is the Obg domain. One can recognise an OBG-type G domain in the interval 160–333 (ADVGIVGYPN…LLDAVGRALF (174 aa)). GTP contacts are provided by residues 166–173 (GYPNAGKS), 191–195 (FTTLT), 212–215 (DIPG), 283–286 (TKID), and 314–316 (SAV). Residues Ser173 and Thr193 each contribute to the Mg(2+) site.

The protein belongs to the TRAFAC class OBG-HflX-like GTPase superfamily. OBG GTPase family. As to quaternary structure, monomer. It depends on Mg(2+) as a cofactor.

Its subcellular location is the cytoplasm. An essential GTPase which binds GTP, GDP and possibly (p)ppGpp with moderate affinity, with high nucleotide exchange rates and a fairly low GTP hydrolysis rate. Plays a role in control of the cell cycle, stress response, ribosome biogenesis and in those bacteria that undergo differentiation, in morphogenesis control. This chain is GTPase Obg, found in Anaeromyxobacter sp. (strain K).